We begin with the raw amino-acid sequence, 806 residues long: Protein translocase subunit SecA (806 aa).

ATP contacts are provided by residues Gln87, 105–109 (GEGKT), and Asp493.

The protein belongs to the SecA family. Monomer and homodimer. Part of the essential Sec protein translocation apparatus which comprises SecA, SecYEG and auxiliary proteins SecDF. Other proteins may also be involved.

Its subcellular location is the cell membrane. The protein resides in the cytoplasm. The catalysed reaction is ATP + H2O + cellular proteinSide 1 = ADP + phosphate + cellular proteinSide 2.. Part of the Sec protein translocase complex. Interacts with the SecYEG preprotein conducting channel. Has a central role in coupling the hydrolysis of ATP to the transfer of proteins into and across the cell membrane, serving as an ATP-driven molecular motor driving the stepwise translocation of polypeptide chains across the membrane. This chain is Protein translocase subunit SecA, found in Mycoplasma genitalium (strain ATCC 33530 / DSM 19775 / NCTC 10195 / G37) (Mycoplasmoides genitalium).